A 180-amino-acid chain; its full sequence is ADP-ribosylation factor 4 (180 aa).

The N-myristoyl glycine moiety is linked to residue Gly2. Residues 24–31, 67–71, and 126–129 each bind GTP; these read GLDAAGKT, DVGGQ, and NKQD. Phosphoserine is present on Ser147.

The protein belongs to the small GTPase superfamily. Arf family. Forms a complex containing RAB11A, ASAP1, RAB3IP, RAP11FIP3 and ARF4; the complex promotes preciliary trafficking; the complex binds to RHO in photoreceptor cells and promotes RHO ciliary transport.

Its subcellular location is the golgi apparatus. It is found in the membrane. GTP-binding protein that functions as an allosteric activator of the cholera toxin catalytic subunit, an ADP-ribosyltransferase. Involved in protein trafficking; may modulate vesicle budding and uncoating within the Golgi apparatus. Part of the ciliary targeting complex containing Rab11, ASAP1, Rabin8/RAB3IP, RAB11FIP3 and ARF4, which direct preciliary vesicle trafficking to mother centriole and ciliogenesis initiation. This chain is ADP-ribosylation factor 4 (ARF4), found in Homo sapiens (Human).